The following is a 616-amino-acid chain: Chaperone protein HscA (616 aa).

This sequence belongs to the heat shock protein 70 family.

Chaperone involved in the maturation of iron-sulfur cluster-containing proteins. Has a low intrinsic ATPase activity which is markedly stimulated by HscB. Involved in the maturation of IscU. This is Chaperone protein HscA from Edwardsiella ictaluri (strain 93-146).